The primary structure comprises 177 residues: Large ribosomal subunit protein uL6 (177 aa).

Belongs to the universal ribosomal protein uL6 family. As to quaternary structure, part of the 50S ribosomal subunit.

Functionally, this protein binds to the 23S rRNA, and is important in its secondary structure. It is located near the subunit interface in the base of the L7/L12 stalk, and near the tRNA binding site of the peptidyltransferase center. The sequence is that of Large ribosomal subunit protein uL6 from Pseudomonas syringae pv. tomato (strain ATCC BAA-871 / DC3000).